The chain runs to 115 residues: Large ribosomal subunit protein bL19 (115 aa).

Belongs to the bacterial ribosomal protein bL19 family.

Its function is as follows. This protein is located at the 30S-50S ribosomal subunit interface and may play a role in the structure and function of the aminoacyl-tRNA binding site. This is Large ribosomal subunit protein bL19 from Fervidobacterium nodosum (strain ATCC 35602 / DSM 5306 / Rt17-B1).